Consider the following 118-residue polypeptide: Autophagy-related protein 8 (118 aa).

Glycine 116 carries Phosphatidylethanolamine amidated glycine lipidation. Positions 117–118 (EA) are cleaved as a propeptide — removed in mature form.

This sequence belongs to the ATG8 family. As to quaternary structure, conjugation to phosphatidylethanolamine (PE) leads to homodimerization. Interacts with ATG1, ATG3, ATG4, ATG7 and ATG12. Post-translationally, the C-terminal Glu-117 and Ala-118 residues of ATG8 are removed by ATG4 to expose Gly-116 at the C-terminus. This Gly-116 forms then a thioester bond with the 'Cys-550' of ATG7 (E1-like activating enzyme) before being transferred to the 'Cys-244' of ATG3 (the specific E2 conjugating enzyme), in order to be finally amidated with phosphatidylethanolamine. This lipid modification anchors ATG8 to membranes and can be reversed by ATG4, releasing soluble ATG8.

It localises to the cytoplasmic vesicle. The protein localises to the cvt vesicle membrane. It is found in the autophagosome membrane. The protein resides in the vacuole membrane. Functionally, ubiquitin-like modifier involved in cytoplasm to vacuole transport (Cvt) vesicles and autophagosome formation. With ATG4, mediates the delivery of the vesicles and autophagosomes to the vacuole via the microtubule cytoskeleton. Required for selective autophagic degradation of the nucleus (nucleophagy) as well as for mitophagy which contributes to regulate mitochondrial quantity and quality by eliminating the mitochondria to a basal level to fulfill cellular energy requirements and preventing excess ROS production. Also participates in membrane fusion events that take place in the early secretory pathway. Also involved in endoplasmic reticulum-specific autophagic process and is essential for the survival of cells subjected to severe ER stress. The ATG8-PE conjugate mediates tethering between adjacent membranes and stimulates membrane hemifusion, leading to expansion of the autophagosomal membrane during autophagy. Moreover not only conjugation, but also subsequent ATG8-PE deconjugation is an important step required to facilitate multiple events during macroautophagy, and especially for efficient autophagosome biogenesis, the assembly of ATG9-containing tubulovesicular clusters into phagophores/autophagosomes, and for the disassembly of PAS-associated ATG components. Autophagy is required for proper vegetative growth, asexual/sexual reproduction, and full virulence. Autophagy is particularly involved in the biosynthesis of deoxynivalenol (DON), an important virulence determinant. The polypeptide is Autophagy-related protein 8 (Gibberella zeae (strain ATCC MYA-4620 / CBS 123657 / FGSC 9075 / NRRL 31084 / PH-1) (Wheat head blight fungus)).